We begin with the raw amino-acid sequence, 488 residues long: 3-octaprenyl-4-hydroxybenzoate carboxy-lyase (488 aa).

Position 172 (asparagine 172) interacts with Mn(2+). Prenylated FMN is bound by residues isoleucine 175–arginine 177, arginine 189–leucine 191, and arginine 194–glycine 195. Glutamate 238 contacts Mn(2+). Aspartate 287 functions as the Proton donor in the catalytic mechanism.

It belongs to the UbiD family. In terms of assembly, homohexamer. Prenylated FMN is required as a cofactor. It depends on Mn(2+) as a cofactor.

The protein localises to the cell membrane. The enzyme catalyses a 4-hydroxy-3-(all-trans-polyprenyl)benzoate + H(+) = a 2-(all-trans-polyprenyl)phenol + CO2. It functions in the pathway cofactor biosynthesis; ubiquinone biosynthesis. Functionally, catalyzes the decarboxylation of 3-octaprenyl-4-hydroxy benzoate to 2-octaprenylphenol, an intermediate step in ubiquinone biosynthesis. The protein is 3-octaprenyl-4-hydroxybenzoate carboxy-lyase of Hahella chejuensis (strain KCTC 2396).